A 219-amino-acid chain; its full sequence is Ribosome maturation factor RimP (219 aa).

Disordered regions lie at residues 1–38 and 189–219; these read MTQR…LATR and VEFT…DEER. Over residues 198-219 the composition is skewed to acidic residues; it reads DAFDGTDEAGDFDDDDVEDEER.

The protein belongs to the RimP family.

The protein resides in the cytoplasm. Functionally, required for maturation of 30S ribosomal subunits. This chain is Ribosome maturation factor RimP, found in Salinispora arenicola (strain CNS-205).